The chain runs to 838 residues: Axin-2 (838 aa).

A disordered region spans residues 1 to 75 (MSSAVLVTLL…EGRASPDSPL (75 aa)). The Tankyrase-binding motif motif lies at 21–30 (APRPPVPGEE). A compositionally biased stretch (polar residues) spans 42 to 55 (KVQSTKPMPVSSNA). Over residues 56 to 69 (RRNEDGLGEPEGRA) the composition is skewed to basic and acidic residues. Residues 81–200 (SLHSLLGDQD…LTSDIYLEYV (120 aa)) enclose the RGS domain. Disordered regions lie at residues 300-333 (SELS…KKQL), 398-435 (IRED…EEDP), 450-483 (PGCQ…LLPT), 568-682 (GSRG…AMPP), and 712-744 (VASQ…DHKE). The span at 303 to 318 (SSDALTDDSMSMTDSS) shows a compositional bias: low complexity. An interaction with GSK3B region spans residues 327–413 (MGSKKQLQRE…KEGSEQALSS (87 aa)). Positions 413–476 (SRDGAPVQHP…PDHHHHHHQQ (64 aa)) are interaction with beta-catenin. Over residues 727–737 (AGPTSFSNPSL) the composition is skewed to polar residues. The 83-residue stretch at 756-838 (ASELIVTYFF…RILGKVERID (83 aa)) folds into the DIX domain.

As to quaternary structure, interacts with SMAD7 and RNF111. Interacts with ANKRD6. Interacts with glycogen synthase kinase-3 beta (GSK3B) and beta-catenin. The interaction between axin and beta-catenin occurs via the armadillo repeats contained in beta-catenin. Interacts with SIAH1. Interacts with SIAH2. Post-translationally, ADP-ribosylated by tankyrase TNKS and TNKS2. Poly-ADP-ribosylated protein is recognized by RNF146, followed by ubiquitination and subsequent activation of the Wnt signaling pathway. Ubiquitinated by RNF146 when poly-ADP-ribosylated, leading to its degradation and subsequent activation of the Wnt signaling pathway. Deubiquitinated by USP34, deubiquitinated downstream of beta-catenin stabilization step: deubiquitination is important Wnt signaling to positively regulate beta-catenin (CTNBB1)-mediated transcription. In terms of processing, probably phosphorylated by GSK3B and dephosphorylated by PP2A. As to expression, expressed in lung and thymus.

The protein resides in the cytoplasm. Its function is as follows. Inhibitor of the Wnt signaling pathway. Down-regulates beta-catenin. Probably facilitate the phosphorylation of beta-catenin and APC by GSK3B. This is Axin-2 (Axin2) from Rattus norvegicus (Rat).